Consider the following 390-residue polypeptide: MAFNFAAILAFVSLAAVTSAAPSKTTCSNGVVVPDAVCCDFVPLASALQSEVLMGDCGEDAHELVRLIFHDAIAISQSMGPSAGGGADGSMLIFPTVEPAFFPNLGIADSVNNLIPFLSQFPTISAGDLVQFAGAVAISNCPGAPQLEFLAGRPNATAPAIDGLIPEPQDDVTKILARFKDAGNFSPAEVVALLASHSIARADHVDPTLDAAPFDSTPFDFDTQIFLEVLLKGVGFPGLANNTGEVSSPLPVTDGTDVGELRLQSDFALARDERTACAWQSFVNEQEAMATAFKNAVKKLAVLGHNRNDLVDCSAVVPVPKPATGTPATFPASTGPQDLELTCTTEPFPTLSTAPGAQQTLIPHCSDGTMTCNSVQFDGPATNFGGADDS.

The N-terminal stretch at 1 to 23 is a signal peptide; sequence MAFNFAAILAFVSLAAVTSAAPS. 5 disulfide bridges follow: C27–C39, C38–C313, C57–C141, C277–C343, and C365–C372. The Mn(2+) site is built by E59 and E63. Catalysis depends on H70, which acts as the Proton acceptor. Positions 71, 86, 88, and 90 each coordinate Ca(2+). The N-linked (GlcNAc...) asparagine glycan is linked to N155. Position 197 (H197) interacts with heme b. S198 lines the Ca(2+) pocket. Mn(2+) is bound at residue D203. Ca(2+) contacts are provided by D215, T217, and D222. An N-linked (GlcNAc...) asparagine glycan is attached at N241.

This sequence belongs to the peroxidase family. Ligninase subfamily. Heme b is required as a cofactor. Requires Ca(2+) as cofactor.

It is found in the secreted. The enzyme catalyses 2 Mn(2+) + H2O2 + 2 H(+) = 2 Mn(3+) + 2 H2O. Functionally, catalyzes the oxidation of Mn(2+) to Mn(3+). The latter, acting as a diffusible redox mediator, is capable of oxidizing a variety of lignin compounds. This is Manganese peroxidase 2 (mnp2) from Phlebia radiata (White-rot fungus).